Consider the following 75-residue polypeptide: U14-hexatoxin-Mg1a (75 aa).

The first 19 residues, 1-19, serve as a signal peptide directing secretion; the sequence is MKLTLFILIVFVVLANVYA. The propeptide occupies 20–31; sequence AGISERNIIGGR.

In terms of processing, contains 4 disulfide bonds. Expressed by the venom gland.

It is found in the secreted. Its function is as follows. No toxicity is observed upon intracranial injection into mice and intrathorax injection into crickets. The chain is U14-hexatoxin-Mg1a from Macrothele gigas (Japanese funnel web spider).